The primary structure comprises 1798 residues: U3 small nucleolar RNA-associated protein 10 (1798 aa).

One copy of the HEAT 1 repeat lies at Leu-583–Lys-620. A run of 2 helical transmembrane segments spans residues Ile-942 to Asn-962 and Ala-998 to Met-1018. HEAT repeat units lie at residues Gln-1042 to His-1079, Leu-1249 to Glu-1286, Ile-1293 to Lys-1331, and Ala-1754 to Glu-1791.

It belongs to the HEATR1/UTP10 family. Component of the ribosomal small subunit (SSU) processome.

Its subcellular location is the nucleus. It is found in the nucleolus. The protein localises to the membrane. In terms of biological role, involved in nucleolar processing of pre-18S ribosomal RNA. Involved in ribosome biosynthesis. This Aspergillus fumigatus (strain ATCC MYA-4609 / CBS 101355 / FGSC A1100 / Af293) (Neosartorya fumigata) protein is U3 small nucleolar RNA-associated protein 10.